A 456-amino-acid chain; its full sequence is Enolase (456 aa).

Q167 contributes to the (2R)-2-phosphoglycerate binding site. Catalysis depends on E209, which acts as the Proton donor. Residues D250, E312, and D339 each coordinate Mg(2+). The (2R)-2-phosphoglycerate site is built by K364, R393, S394, and K415. K364 acts as the Proton acceptor in catalysis.

This sequence belongs to the enolase family. Mg(2+) is required as a cofactor.

The protein resides in the cytoplasm. It is found in the secreted. Its subcellular location is the cell surface. It catalyses the reaction (2R)-2-phosphoglycerate = phosphoenolpyruvate + H2O. It participates in carbohydrate degradation; glycolysis; pyruvate from D-glyceraldehyde 3-phosphate: step 4/5. Functionally, catalyzes the reversible conversion of 2-phosphoglycerate (2-PG) into phosphoenolpyruvate (PEP). It is essential for the degradation of carbohydrates via glycolysis. The sequence is that of Enolase from Mycoplasmopsis pulmonis (strain UAB CTIP) (Mycoplasma pulmonis).